The chain runs to 664 residues: DNA mismatch repair protein MutL (664 aa).

A disordered region spans residues 382-447 (RKAGQEQQLQ…YGEPAPSKQQ (66 aa)). Over residues 427 to 436 (RHTTSSNQSE) the composition is skewed to polar residues.

The protein belongs to the DNA mismatch repair MutL/HexB family.

This protein is involved in the repair of mismatches in DNA. It is required for dam-dependent methyl-directed DNA mismatch repair. May act as a 'molecular matchmaker', a protein that promotes the formation of a stable complex between two or more DNA-binding proteins in an ATP-dependent manner without itself being part of a final effector complex. The polypeptide is DNA mismatch repair protein MutL (Vibrio vulnificus (strain YJ016)).